The following is a 247-amino-acid chain: MSIDFALPQDAAIPAAAEERVNRTPLAVSVRGLQRRYGARVVIDALDLDIREGEFVTLLGESGCGKTTLLRALAGLDQPDAGQIRAPERPSVVFQEHRLLPWATLWENVVLGHETTIGRVGATRALAEVGLSGREDDWPRNLSGGQAQRVALARGLVRDPALLLLDEPFAALDALTRIKMHGLVKELVARHHPGVLLVTHDVDEALTLADRILVMRSGRIAASFHPKNHTPQALRPILLEELGVQSH.

Residues 28 to 242 (VSVRGLQRRY…ALRPILLEEL (215 aa)) form the ABC transporter domain. 60 to 67 (GESGCGKT) is an ATP binding site.

This sequence belongs to the ABC transporter superfamily. Aliphatic sulfonates importer (TC 3.A.1.17.2) family. As to quaternary structure, the complex is composed of two ATP-binding proteins (SsuB), two transmembrane proteins (SsuC) and a solute-binding protein (SsuA).

The protein localises to the cell inner membrane. It catalyses the reaction ATP + H2O + aliphatic sulfonate-[sulfonate-binding protein]Side 1 = ADP + phosphate + aliphatic sulfonateSide 2 + [sulfonate-binding protein]Side 1.. Its function is as follows. Part of the ABC transporter complex SsuABC involved in aliphatic sulfonates import. Responsible for energy coupling to the transport system. This chain is Aliphatic sulfonates import ATP-binding protein SsuB 2, found in Paraburkholderia xenovorans (strain LB400).